The sequence spans 172 residues: Small ribosomal subunit protein uS5 (172 aa).

An S5 DRBM domain is found at 11-74 (LSEVLVDVNR…QAAKKRMMKV (64 aa)).

This sequence belongs to the universal ribosomal protein uS5 family. As to quaternary structure, part of the 30S ribosomal subunit. Contacts proteins S4 and S8.

Its function is as follows. With S4 and S12 plays an important role in translational accuracy. Functionally, located at the back of the 30S subunit body where it stabilizes the conformation of the head with respect to the body. The chain is Small ribosomal subunit protein uS5 from Rickettsia canadensis (strain McKiel).